Consider the following 155-residue polypeptide: Small ribosomal subunit protein uS7 (155 aa).

This sequence belongs to the universal ribosomal protein uS7 family. In terms of assembly, part of the 30S ribosomal subunit. Contacts proteins S9 and S11.

Functionally, one of the primary rRNA binding proteins, it binds directly to 16S rRNA where it nucleates assembly of the head domain of the 30S subunit. Is located at the subunit interface close to the decoding center, probably blocks exit of the E-site tRNA. The protein is Small ribosomal subunit protein uS7 of Prosthecochloris aestuarii (strain DSM 271 / SK 413).